The chain runs to 475 residues: Ankyrin repeat, SAM and basic leucine zipper domain-containing protein 1 (475 aa).

Positions 1–25 (MAAGALRGLPVAGGGESSESEDDGW) are disordered. Phosphoserine is present on residues serine 17, serine 18, and serine 20. ANK repeat units lie at residues 45–74 (EKKEKFKKAMTIGDVSLVQELLDSGISVDS), 78–107 (YGWTPLMYAASVANAELVRVLLDRGANASF), 110–144 (DKQTILITACSAHGSEEQILKCVELLLSRNADPNV), 148–177 (RLMTPIMYAARDGHTQVVALLVAHGAEVNT), 181–210 (NGYTALTWAARQGHKNIVLKLLELGANKML), and 214–243 (DGKMPSEIAKRNKHHEIFNLLSFTLNPLEG). An SAM domain is found at 272 to 334 (SYTAFGDLEV…KILAALKELQ (63 aa)).

In terms of assembly, interacts with DDX4, PIWIL1, RANBP9 and TDRD1.

It localises to the cytoplasm. In terms of biological role, plays a central role during spermatogenesis by repressing transposable elements and preventing their mobilization, which is essential for the germline integrity. Acts via the piRNA metabolic process, which mediates the repression of transposable elements during meiosis by forming complexes composed of piRNAs and Piwi proteins and governs the methylation and subsequent repression of transposons. Its association with pi-bodies suggests a participation in the primary piRNAs metabolic process. Required prior to the pachytene stage to facilitate the production of multiple types of piRNAs, including those associated with repeats involved in the regulation of retrotransposons. May act by mediating protein-protein interactions during germ cell maturation. This chain is Ankyrin repeat, SAM and basic leucine zipper domain-containing protein 1 (ASZ1), found in Chlorocebus aethiops (Green monkey).